We begin with the raw amino-acid sequence, 273 residues long: Ribosomal RNA small subunit methyltransferase A (273 aa).

Asparagine 18, leucine 20, glycine 45, glutamate 66, aspartate 91, and asparagine 113 together coordinate S-adenosyl-L-methionine.

This sequence belongs to the class I-like SAM-binding methyltransferase superfamily. rRNA adenine N(6)-methyltransferase family. RsmA subfamily.

The protein localises to the cytoplasm. It carries out the reaction adenosine(1518)/adenosine(1519) in 16S rRNA + 4 S-adenosyl-L-methionine = N(6)-dimethyladenosine(1518)/N(6)-dimethyladenosine(1519) in 16S rRNA + 4 S-adenosyl-L-homocysteine + 4 H(+). In terms of biological role, specifically dimethylates two adjacent adenosines (A1518 and A1519) in the loop of a conserved hairpin near the 3'-end of 16S rRNA in the 30S particle. May play a critical role in biogenesis of 30S subunits. This is Ribosomal RNA small subunit methyltransferase A from Shigella dysenteriae serotype 1 (strain Sd197).